Consider the following 84-residue polypeptide: Antitoxin VapB30 (84 aa).

In terms of biological role, antitoxin component of a type II toxin-antitoxin (TA) system. Upon expression in M.smegmatis neutralizes the effect of cognate toxin VapC30. This Mycobacterium tuberculosis (strain ATCC 25618 / H37Rv) protein is Antitoxin VapB30 (vapB30).